The following is a 334-amino-acid chain: Glycerol-1-phosphate dehydrogenase [NAD(P)+] (334 aa).

Residues 77–81 (GRPID) and 99–102 (TTAS) each bind NAD(+). Aspartate 104 contacts substrate. Serine 108 contacts NAD(+). Aspartate 147 lines the substrate pocket. Residues aspartate 147 and histidine 225 each coordinate Zn(2+). A substrate-binding site is contributed by histidine 229. Histidine 246 provides a ligand contact to Zn(2+).

This sequence belongs to the glycerol-1-phosphate dehydrogenase family. Requires Zn(2+) as cofactor.

It localises to the cytoplasm. The enzyme catalyses sn-glycerol 1-phosphate + NAD(+) = dihydroxyacetone phosphate + NADH + H(+). It catalyses the reaction sn-glycerol 1-phosphate + NADP(+) = dihydroxyacetone phosphate + NADPH + H(+). Its pathway is membrane lipid metabolism; glycerophospholipid metabolism. Functionally, catalyzes the NAD(P)H-dependent reduction of dihydroxyacetonephosphate (DHAP or glycerone phosphate) to glycerol 1-phosphate (G1P). The G1P thus generated is used as the glycerophosphate backbone of phospholipids in the cellular membranes of Archaea. The polypeptide is Glycerol-1-phosphate dehydrogenase [NAD(P)+] (Methanococcus maripaludis (strain C5 / ATCC BAA-1333)).